The chain runs to 710 residues: Early transcription factor 82 kDa subunit (710 aa).

This sequence belongs to the poxviridae VETF large subunit family. Heterodimer of a 70 kDa and a 82 kDa subunit. Part of the early transcription complex composed of ETF, RAP94/OPG109, and the DNA-directed RNA polymerase.

It localises to the virion. Acts with RNA polymerase to initiate transcription from early gene promoters. Is recruited by the RPO-associated protein of 94 kDa RAP94/OPG109 to form the early transcription complex, which also contains the core RNA polymerase. ETF heterodimer binds to early gene promoters. In Variola virus (isolate Human/India/Ind3/1967) (VARV), this protein is Early transcription factor 82 kDa subunit (OPG133).